The primary structure comprises 353 residues: Outer membrane protein P2 (353 aa).

The first 20 residues, 1–20, serve as a signal peptide directing secretion; that stretch reads MKKTLAALIVGAFAASAANA.

Belongs to the Gram-negative porin family. Homotrimer.

It is found in the cell outer membrane. Its function is as follows. Forms pores that allow passive diffusion of small molecules across the outer membrane. This chain is Outer membrane protein P2 (ompP2), found in Haemophilus influenzae.